The sequence spans 404 residues: Phosphopentomutase (404 aa).

Residues Asp-10, Asp-303, His-308, Asp-344, His-345, and His-356 each coordinate Mn(2+).

The protein belongs to the phosphopentomutase family. Mn(2+) serves as cofactor.

The protein resides in the cytoplasm. The catalysed reaction is 2-deoxy-alpha-D-ribose 1-phosphate = 2-deoxy-D-ribose 5-phosphate. It catalyses the reaction alpha-D-ribose 1-phosphate = D-ribose 5-phosphate. It participates in carbohydrate degradation; 2-deoxy-D-ribose 1-phosphate degradation; D-glyceraldehyde 3-phosphate and acetaldehyde from 2-deoxy-alpha-D-ribose 1-phosphate: step 1/2. In terms of biological role, isomerase that catalyzes the conversion of deoxy-ribose 1-phosphate (dRib-1-P) and ribose 1-phosphate (Rib-1-P) to deoxy-ribose 5-phosphate (dRib-5-P) and ribose 5-phosphate (Rib-5-P), respectively. The sequence is that of Phosphopentomutase from Shewanella baltica (strain OS223).